A 1040-amino-acid chain; its full sequence is Multidrug resistance protein MdtB (1040 aa).

12 helical membrane passes run 16–36 (FIMR…AGII), 342–362 (DTQF…YLFL), 369–389 (IIPG…MVFL), 396–416 (LTLM…IVVI), 440–460 (IGFT…PLLF), 472–492 (FAVT…TLTP), 537–557 (WLTL…WVFI), 863–883 (LGST…VLGV), 888–908 (FIHP…ALLA), 911–931 (LAGS…IGIV), 968–988 (ILMT…STGV), and 998–1018 (IGMV…TPVI).

This sequence belongs to the resistance-nodulation-cell division (RND) (TC 2.A.6) family. MdtB subfamily. Part of a tripartite efflux system composed of MdtA, MdtB and MdtC. MdtB forms a heteromultimer with MdtC.

It is found in the cell inner membrane. This Klebsiella pneumoniae (strain 342) protein is Multidrug resistance protein MdtB.